The primary structure comprises 237 residues: Oligoribonuclease, mitochondrial (237 aa).

A mitochondrion-targeting transit peptide spans 1 to 25 (MLGVSLGARLLRGVGGRRGQFGARG). Residues 43–207 (MVWVDLEMTG…DDISESIKEL (165 aa)) enclose the Exonuclease domain. The Mg(2+) site is built by D47 and E49. S92 is subject to Phosphoserine. At Y122 the chain carries Phosphotyrosine. D147 lines the Mg(2+) pocket. K173 is subject to N6-acetyllysine. Residue H194 is part of the active site. A Mg(2+)-binding site is contributed by D199.

It belongs to the oligoribonuclease family. In terms of assembly, homodimer. Homotetramer. Requires Mn(2+) as cofactor. Mg(2+) is required as a cofactor.

It is found in the mitochondrion intermembrane space. It localises to the mitochondrion matrix. The protein resides in the mitochondrion. The protein localises to the cytoplasm. Its subcellular location is the nucleus. 3'-to-5'exoribonuclease that preferentially degrades DNA and RNA oligonucleotides composed of only two nucleotides. Binds and degrades longer oligonucleotides with a lower affinity. Plays dual roles in mitochondria, scavenging nanoRNAs (small RNA oligonucleotides of &lt;5 nucleotides) that are produced by the degradosome and clearing short RNAs that are generated by RNA processing. Essential for correct initiation of mitochondrial transcription, degrading mitochondrial RNA dinucleotides to prevent RNA-primed transcription at non-canonical sites in the mitochondrial genome. Essential for embryonic development. The protein is Oligoribonuclease, mitochondrial (Rexo2) of Mus musculus (Mouse).